Reading from the N-terminus, the 200-residue chain is Holliday junction branch migration complex subunit RuvA (200 aa).

Residues 1–63 (MIASVRGVVT…EDSLTLYGFA (63 aa)) are domain I. Residues 64–142 (DDDAKALFEL…PVPVGADSAA (79 aa)) are domain II. The tract at residues 143–151 (GVTTGAWPE) is flexible linker. The segment at 151 to 200 (EQVRQALVGLGWTAAQADQAVTAVAETVDGAVPPVPVLLRQAIRLLGRTR) is domain III.

It belongs to the RuvA family. In terms of assembly, homotetramer. Forms an RuvA(8)-RuvB(12)-Holliday junction (HJ) complex. HJ DNA is sandwiched between 2 RuvA tetramers; dsDNA enters through RuvA and exits via RuvB. An RuvB hexamer assembles on each DNA strand where it exits the tetramer. Each RuvB hexamer is contacted by two RuvA subunits (via domain III) on 2 adjacent RuvB subunits; this complex drives branch migration. In the full resolvosome a probable DNA-RuvA(4)-RuvB(12)-RuvC(2) complex forms which resolves the HJ.

It is found in the cytoplasm. In terms of biological role, the RuvA-RuvB-RuvC complex processes Holliday junction (HJ) DNA during genetic recombination and DNA repair, while the RuvA-RuvB complex plays an important role in the rescue of blocked DNA replication forks via replication fork reversal (RFR). RuvA specifically binds to HJ cruciform DNA, conferring on it an open structure. The RuvB hexamer acts as an ATP-dependent pump, pulling dsDNA into and through the RuvAB complex. HJ branch migration allows RuvC to scan DNA until it finds its consensus sequence, where it cleaves and resolves the cruciform DNA. The chain is Holliday junction branch migration complex subunit RuvA from Salinispora tropica (strain ATCC BAA-916 / DSM 44818 / JCM 13857 / NBRC 105044 / CNB-440).